A 254-amino-acid polypeptide reads, in one-letter code: GTP cyclohydrolase 1 type 2 homolog (254 aa).

A divalent metal cation contacts are provided by His68, His69, Asp106, His222, and Glu226.

Belongs to the GTP cyclohydrolase I type 2/NIF3 family. Homohexamer.

This chain is GTP cyclohydrolase 1 type 2 homolog, found in Allochromatium vinosum (strain ATCC 17899 / DSM 180 / NBRC 103801 / NCIMB 10441 / D) (Chromatium vinosum).